Reading from the N-terminus, the 192-residue chain is Urease accessory protein UreE (192 aa).

The segment at 170 to 192 (EHHGHSHSHSHDHVHDEKCGHKH) is disordered. The span at 178 to 192 (HSHDHVHDEKCGHKH) shows a compositional bias: basic and acidic residues.

This sequence belongs to the UreE family.

The protein resides in the cytoplasm. Functionally, involved in urease metallocenter assembly. Binds nickel. Probably functions as a nickel donor during metallocenter assembly. In Cupriavidus necator (strain ATCC 17699 / DSM 428 / KCTC 22496 / NCIMB 10442 / H16 / Stanier 337) (Ralstonia eutropha), this protein is Urease accessory protein UreE.